We begin with the raw amino-acid sequence, 840 residues long: MTQVTVKELAQVVDTPVERLLLQMRDAGLPHTSAEQVVTDSEKQALLTHLKGSHGDRASEPRKITLQRKTTTTLKVGGSKTVSVEVRKKKTYVKRSPDEIEAERQRELEEQRAAEEAERLKAEEAAARQRAEEEARKAEEAARAKAAQEAAATAGAEPAVVADVAVAEPVAKPAAVEERKKEEPRRAPKRDEDDDRRDRKHTQHRPSVKEKEKVPAPRVAPRSTDEESDGYRRGGRGGKSKLKKRNQHGFQNPTGPIVREVNIGETITVAELAAQMSVKGAEVVKFMFKMGSPVTINQVLDQETAQLVAEELGHKVKLVSENALEEQLAESLKFEGEAVTRAPVVTVMGHVDHGKTSLLDYIRRAKVAAGEAGGITQHIGAYHVETERGMVTFLDTPGHAAFTAMRARGAQATDIVILVVAADDGVMPQTQEAVQHAKAAGVPIVVAVNKIDKPEANPDNIKNGLAALDVIPEEWGGDAPFVPVSAKLGTGVDELLEAVLLQAEVLELKATPSAPGRGVVVESRLDKGRGPVATVLVQDGTLRQGDMVLVGINYGRVRAMLDENGKPIKEAGPSIPVEILGLDGTPDAGDEMTVVADEKKAREVALFRQGKFREVKLARAHAGKLENIFENMGQEEKKTLNIVLKADVRGSLEALQGSLSGLGNDEVQVRVVGGGVGGITESDANLALASNAVLFGFNVRADAGARKIVEAEGLDMRYYNVIYDIIEDVKKALTGMLGSDLRENILGIAEVRDVFRSPKFGAIAGCMVTEGMVHRNRPIRVLRDDVVIFEGELESLRRFKDDVAEVRAGMECGIGVKSYNDVKVGDKIEVFEKVEVARSL.

Basic and acidic residues predominate over residues 95 to 143; it reads RSPDEIEAERQRELEEQRAAEEAERLKAEEAAARQRAEEEARKAEEAAR. Disordered regions lie at residues 95–155 and 172–256; these read RSPD…ATAG and KPAA…PTGP. The segment covering 144–155 has biased composition (low complexity); it reads AKAAQEAAATAG. Basic and acidic residues-rich tracts occupy residues 175–191 and 223–232; these read AVEE…PKRD and STDEESDGYR. Positions 233-247 are enriched in basic residues; it reads RGGRGGKSKLKKRNQ. A tr-type G domain is found at 340–509; it reads TRAPVVTVMG…LLQAEVLELK (170 aa). The interval 349 to 356 is G1; it reads GHVDHGKT. 349-356 provides a ligand contact to GTP; sequence GHVDHGKT. The segment at 374–378 is G2; sequence GITQH. Residues 395–398 form a G3 region; it reads DTPG. GTP contacts are provided by residues 395 to 399 and 449 to 452; these read DTPGH and NKID. Positions 449–452 are G4; that stretch reads NKID. The tract at residues 485-487 is G5; it reads SAK.

The protein belongs to the TRAFAC class translation factor GTPase superfamily. Classic translation factor GTPase family. IF-2 subfamily.

Its subcellular location is the cytoplasm. In terms of biological role, one of the essential components for the initiation of protein synthesis. Protects formylmethionyl-tRNA from spontaneous hydrolysis and promotes its binding to the 30S ribosomal subunits. Also involved in the hydrolysis of GTP during the formation of the 70S ribosomal complex. This is Translation initiation factor IF-2 from Pseudomonas aeruginosa (strain LESB58).